A 266-amino-acid chain; its full sequence is Vitamin B12-binding protein (266 aa).

The N-terminal stretch at 1 to 22 is a signal peptide; the sequence is MVKQMFRALVALLLTLPVWLYA. The Fe/B12 periplasmic-binding domain maps to 25–266; it reads RVITLSPANT…QLCNALSQVN (242 aa). Cyanocob(III)alamin contacts are provided by residues Y50 and 242-246; that span reads DWFER. A disulfide bond links C183 and C259.

The protein belongs to the BtuF family. In terms of assembly, the complex is composed of two ATP-binding proteins (BtuD), two transmembrane proteins (BtuC) and a solute-binding protein (BtuF).

The protein localises to the periplasm. Its function is as follows. Part of the ABC transporter complex BtuCDF involved in vitamin B12 import. Binds vitamin B12 and delivers it to the periplasmic surface of BtuC. The chain is Vitamin B12-binding protein from Salmonella choleraesuis (strain SC-B67).